The following is a 423-amino-acid chain: Large ribosomal subunit protein mL37 (423 aa).

A mitochondrion-targeting transit peptide spans 1-29 (MALASGPARRVLARPWGLGLEGCGVPRRG).

Belongs to the mitochondrion-specific ribosomal protein mL37 family. As to quaternary structure, component of the mitochondrial ribosome large subunit (39S) which comprises a 16S rRNA and about 50 distinct proteins.

The protein resides in the mitochondrion. The protein is Large ribosomal subunit protein mL37 (MRPL37) of Bos taurus (Bovine).